Consider the following 501-residue polypeptide: Sugar phosphate exchanger 3 (501 aa).

Residues 20 to 40 (CTHHHIVVFLLTFFSYSLLHA) traverse the membrane as a helical segment. Asparagine 62 carries an N-linked (GlcNAc...) asparagine glycan. 5 consecutive transmembrane segments (helical) span residues 87-107 (TLFLGTLDTIFLFSYAVGLFV), 119-139 (WVLSFGMCSSALVVFFFGTLT), 153-173 (LWVVNGLLQSTGWPCVVAVMG), 183-203 (FVFGLWSACASVGNILGAFLA), and 214-234 (AFLVTASVQFAGGVIVFCGLL). A glycan (N-linked (GlcNAc...) asparagine) is linked at asparagine 273. The next 6 membrane-spanning stretches (helical) occupy residues 298 to 320 (GVVLYSLAYACLKLVNYSFFFWL), 340 to 360 (IWYDVGGIIGGTIQGLISDVL), 364 to 384 (APVLAISLLFAVGSLFGYSRS), 393 to 413 (VIMAITGFFIGGPSNMISSAI), 435 to 455 (GIVDGTGSIGAAVGQYLVSLI), and 459 to 479 (LGWMWVFYFFILMASSTILFI).

The protein belongs to the major facilitator superfamily. Organophosphate:Pi antiporter (OPA) (TC 2.A.1.4) family.

The protein localises to the endoplasmic reticulum membrane. It localises to the lysosome membrane. Unlike the other SLC37 members, seems to lack glucose-6-phosphate antiporter activity. The chain is Sugar phosphate exchanger 3 (SLC37A3) from Gallus gallus (Chicken).